A 563-amino-acid chain; its full sequence is Efflux pump FUS6 (563 aa).

Residues 1 to 30 (MPQPDKMAAVNNAMPQPAPEKSLSSDPQPE) form a disordered region. 5 helical membrane-spanning segments follow: residues 39 to 59 (WLIF…TSII), 75 to 95 (LYVW…PIFA), 105 to 125 (SLTL…GGAH), 138 to 158 (GIGG…MVSI), and 167 to 187 (IIGG…GAFA). Asparagine 189 carries an N-linked (GlcNAc...) asparagine glycan. 3 helical membrane-spanning segments follow: residues 194–214 (WIFY…GLFL), 233–253 (WGGS…LSWG), and 261–281 (GWQT…FFAY). Asparagine 299 is a glycosylation site (N-linked (GlcNAc...) asparagine). The next 6 helical transmembrane spans lie at 305-325 (LLVI…FLPV), 340-360 (VMLF…GITI), 368-388 (VWHF…TLLD), 401-421 (ILFG…ILAS), 433-453 (AWTF…AAVF), and 509-529 (KVVW…CFFV). N-linked (GlcNAc...) asparagine glycosylation occurs at asparagine 553.

Belongs to the major facilitator superfamily. TCR/Tet family.

Its subcellular location is the membrane. Efflux pump; part of the gene cluster that mediates the biosynthesis of the mycotoxin fusarin C. Within the cluster, FUS1, FUS2, FUS8 and FUS9 are sufficient for fusarin production. The other FUS cluster members are not essential for fusarin C biosynthesis. This Gibberella moniliformis (strain M3125 / FGSC 7600) (Maize ear and stalk rot fungus) protein is Efflux pump FUS6.